Reading from the N-terminus, the 457-residue chain is Dihydrolipoyllysine-residue acetyltransferase component of pyruvate dehydrogenase complex, mitochondrial (457 aa).

Residues Met1–Tyr30 constitute a mitochondrion transit peptide. Residues His36–Val112 form the Lipoyl-binding domain. Residue Lys77 is modified to N6-lipoyllysine. The tract at residues Ala129–Gly168 is disordered. Basic and acidic residues predominate over residues Pro139–Ser149. N6-crotonyllysine is present on Lys148. A Peripheral subunit-binding (PSBD) domain is found at Asn179–Ile216. Active-site residues include His430 and Asp434.

Belongs to the 2-oxoacid dehydrogenase family. As to quaternary structure, eukaryotic pyruvate dehydrogenase (PDH) complexes are organized as a core consisting of the oligomeric dihydrolipoamide acetyl-transferase (E2), around which are arranged multiple copies of pyruvate dehydrogenase (E1), dihydrolipoamide dehydrogenase (E3) and protein X (E3BP) bound by non-covalent bonds. Interacts with SIR5; the interaction is direct. (R)-lipoate is required as a cofactor. Decrotonylated at 'Lys-148' by SIR5, which inhibits the activity of the pyruvate dehydrogenase complex (PDC).

It is found in the mitochondrion matrix. The catalysed reaction is N(6)-[(R)-dihydrolipoyl]-L-lysyl-[protein] + acetyl-CoA = N(6)-[(R)-S(8)-acetyldihydrolipoyl]-L-lysyl-[protein] + CoA. Functionally, the pyruvate dehydrogenase complex catalyzes the overall conversion of pyruvate to acetyl-CoA and CO(2). High pyruvate dehydrogenase complex activity is required for sufficient energy production during germination of conidia. This chain is Dihydrolipoyllysine-residue acetyltransferase component of pyruvate dehydrogenase complex, mitochondrial, found in Fusarium oxysporum f. sp. lycopersici (strain 4287 / CBS 123668 / FGSC 9935 / NRRL 34936) (Fusarium vascular wilt of tomato).